Consider the following 579-residue polypeptide: V-type ATP synthase alpha chain (579 aa).

Residue 227–234 coordinates ATP; the sequence is GGFGTGKT.

Belongs to the ATPase alpha/beta chains family.

It carries out the reaction ATP + H2O + 4 H(+)(in) = ADP + phosphate + 5 H(+)(out). Its function is as follows. Produces ATP from ADP in the presence of a proton gradient across the membrane. The V-type alpha chain is a catalytic subunit. In Anaeromyxobacter sp. (strain K), this protein is V-type ATP synthase alpha chain.